Reading from the N-terminus, the 201-residue chain is Protein lin-7 homolog B (201 aa).

The Kinase interacting site signature appears at 1–13; it reads MAALVEPLGLERE. The 56-residue stretch at 10–65 folds into the L27 domain; sequence LEREVSRAVELLERLQRSGELPPQKLQALQRVLQSRFCSAIREVYEQLYDTLDITG. Residues 93 to 175 form the PDZ domain; the sequence is VVELPKTDEG…SVKLVVRYTP (83 aa).

Belongs to the lin-7 family. Forms a complex with CASK and CASKIN1. Component of the brain-specific heterotrimeric complex (LIN-10-LIN-2-LIN-7 complex) composed of at least APBA1, CASK, and LIN7, which associates with the motor protein KIF17 to transport vesicles along microtubules. Forms a heterotrimeric complex composed of MMP5, LIN7B and PATJ; the N-terminal L27 domain of PALS1 interacts with the L27 domain of PATJ and the C-terminal L27 domain of PALS1 interacts with the L27 domain of LIN7B. Forms a heterotrimeric complex with DLG1 and CASK via their L27 domains. Interacts with DLG4 and GRIN2B as well as CDH1 and CTNNB1, the channels KCNJ12/Kir2.2, KCNJ4/Kir2.3 and probably KCNJ2/Kir2.1 and SLC6A12/BGT-1 via its PDZ domain. The association of LIN7A with cadherin and beta-catenin is calcium-dependent, occurs at synaptic junctions and requires the actin cytoskeleton. Interacts with EGFR, ERBB2, ERBB3 and ERBB4 with both PDZ and KID domains. Interacts with ASIC3. Interacts with TOPK. Interacts with RTKN. Associates with KIF17 via APBA1. Interacts with APBA1. Interacts with MPP7. Interacts with DLG2. Interacts with DLG3.

It localises to the cell membrane. Its subcellular location is the basolateral cell membrane. The protein localises to the cell junction. It is found in the postsynaptic density membrane. The protein resides in the tight junction. Plays a role in establishing and maintaining the asymmetric distribution of channels and receptors at the plasma membrane of polarized cells. Forms membrane-associated multiprotein complexes that may regulate delivery and recycling of proteins to the correct membrane domains. The tripartite complex composed of LIN7 (LIN7A, LIN7B or LIN7C), CASK and APBA1 associates with the motor protein KIF17 to transport vesicles containing N-methyl-D-aspartate (NMDA) receptor subunit NR2B along microtubules. This complex may have the potential to couple synaptic vesicle exocytosis to cell adhesion in brain. Ensures the proper localization of GRIN2B (subunit 2B of the NMDA receptor) to neuronal postsynaptic density and may function in localizing synaptic vesicles at synapses where it is recruited by beta-catenin and cadherin. Required to localize Kir2 channels, GABA transporter (SLC6A12) and EGFR/ERBB1, ERBB2, ERBB3 and ERBB4 to the basolateral membrane of epithelial cells. May increase the amplitude of ASIC3 acid-evoked currents by stabilizing the channel at the cell surface. The sequence is that of Protein lin-7 homolog B (LIN7B) from Bos taurus (Bovine).